A 170-amino-acid chain; its full sequence is Lipoprotein signal peptidase (170 aa).

Helical transmembrane passes span 71–91 and 97–116; these read YFFI…ILEN and AIAY…DRVF. Catalysis depends on residues D122 and D140. A helical transmembrane segment spans residues 131–151; the sequence is WHWPAFNLADIAIVLGALLFV.

Belongs to the peptidase A8 family.

It localises to the cell inner membrane. It catalyses the reaction Release of signal peptides from bacterial membrane prolipoproteins. Hydrolyzes -Xaa-Yaa-Zaa-|-(S,diacylglyceryl)Cys-, in which Xaa is hydrophobic (preferably Leu), and Yaa (Ala or Ser) and Zaa (Gly or Ala) have small, neutral side chains.. It functions in the pathway protein modification; lipoprotein biosynthesis (signal peptide cleavage). Its function is as follows. This protein specifically catalyzes the removal of signal peptides from prolipoproteins. The polypeptide is Lipoprotein signal peptidase (Serratia marcescens).